The chain runs to 156 residues: ATP synthase subunit b (156 aa).

Residues 3–23 traverse the membrane as a helical segment; sequence ITFTIFAQSIAFAALIWIVAT.

The protein belongs to the ATPase B chain family. In terms of assembly, F-type ATPases have 2 components, F(1) - the catalytic core - and F(0) - the membrane proton channel. F(1) has five subunits: alpha(3), beta(3), gamma(1), delta(1), epsilon(1). F(0) has three main subunits: a(1), b(2) and c(10-14). The alpha and beta chains form an alternating ring which encloses part of the gamma chain. F(1) is attached to F(0) by a central stalk formed by the gamma and epsilon chains, while a peripheral stalk is formed by the delta and b chains.

The protein resides in the cell inner membrane. Its function is as follows. F(1)F(0) ATP synthase produces ATP from ADP in the presence of a proton or sodium gradient. F-type ATPases consist of two structural domains, F(1) containing the extramembraneous catalytic core and F(0) containing the membrane proton channel, linked together by a central stalk and a peripheral stalk. During catalysis, ATP synthesis in the catalytic domain of F(1) is coupled via a rotary mechanism of the central stalk subunits to proton translocation. Functionally, component of the F(0) channel, it forms part of the peripheral stalk, linking F(1) to F(0). The protein is ATP synthase subunit b of Xylella fastidiosa (strain M12).